Reading from the N-terminus, the 95-residue chain is Aspartyl/glutamyl-tRNA(Asn/Gln) amidotransferase subunit C (95 aa).

It belongs to the GatC family. In terms of assembly, heterotrimer of A, B and C subunits.

It catalyses the reaction L-glutamyl-tRNA(Gln) + L-glutamine + ATP + H2O = L-glutaminyl-tRNA(Gln) + L-glutamate + ADP + phosphate + H(+). The enzyme catalyses L-aspartyl-tRNA(Asn) + L-glutamine + ATP + H2O = L-asparaginyl-tRNA(Asn) + L-glutamate + ADP + phosphate + 2 H(+). Its function is as follows. Allows the formation of correctly charged Asn-tRNA(Asn) or Gln-tRNA(Gln) through the transamidation of misacylated Asp-tRNA(Asn) or Glu-tRNA(Gln) in organisms which lack either or both of asparaginyl-tRNA or glutaminyl-tRNA synthetases. The reaction takes place in the presence of glutamine and ATP through an activated phospho-Asp-tRNA(Asn) or phospho-Glu-tRNA(Gln). The chain is Aspartyl/glutamyl-tRNA(Asn/Gln) amidotransferase subunit C from Beijerinckia indica subsp. indica (strain ATCC 9039 / DSM 1715 / NCIMB 8712).